A 478-amino-acid chain; its full sequence is PRAME family member 15 (478 aa).

The LRR 1; degenerate repeat unit spans residues 99–126 (RWKLQVLDLQDVCENFWMVWSEAMAHGC). The stretch at 181-205 (HLCCKKLKILGMPFRNIRSILKMVN) is one LRR 2; degenerate repeat. Residues 206–232 (LDCIQEVEVNCKWVLPILTQFTPYLGH) form an LRR 3; degenerate repeat. The stretch at 233-268 (MRNLQKLVLSHMDVSRYVSPEQKKEIVTQFTTQFLK) is one LRR 4; degenerate repeat. LRR repeat units follow at residues 269-294 (LRCLQKLYMNSVSFLEGHLDQLLSCL), 295-326 (KTSLKVLTITNCVLLESDLKHLSQCPSISQLK), 327-347 (TLDLSGIRLTNYSLVPLQILL), 351-378 (AATLEYLDLDDCGIIDSQVNAILPALSR), and 379-403 (CFELNTFSFCGNPICMATLENLLSH).

It belongs to the PRAME family.

The polypeptide is PRAME family member 15 (Homo sapiens (Human)).